Here is a 176-residue protein sequence, read N- to C-terminus: uncharacterized protein (176 aa).

Residues 1 to 12 (MRLPYSSSKPIP) show a composition bias toward polar residues. Disordered regions lie at residues 1-88 (MRLP…PQQQ) and 109-132 (VNNSPIKTPSKKHRSSSKKSPSSS). Over residues 13–24 (TNNNNNNNNTNN) the composition is skewed to low complexity. The segment covering 37 to 46 (SYYQTQENNK) has biased composition (polar residues). Positions 47-88 (PQQSQQHPLLQHQQQQQQQQQQQQQQQQQQQQQQQQQQPQQQ) are enriched in low complexity.

This is an uncharacterized protein from Dictyostelium discoideum (Social amoeba).